The sequence spans 86 residues: RNA-binding protein Hfq (86 aa).

A Sm domain is found at D9–V68.

Belongs to the Hfq family. In terms of assembly, homohexamer.

In terms of biological role, RNA chaperone that binds small regulatory RNA (sRNAs) and mRNAs to facilitate mRNA translational regulation in response to envelope stress, environmental stress and changes in metabolite concentrations. Also binds with high specificity to tRNAs. The chain is RNA-binding protein Hfq from Saccharophagus degradans (strain 2-40 / ATCC 43961 / DSM 17024).